We begin with the raw amino-acid sequence, 411 residues long: tRNA (guanine(37)-N(1))-methyltransferase (411 aa).

S-adenosyl-L-methionine is bound by residues histidine 216, 254–255 (DL), 282–283 (DG), and asparagine 303. Residues 391 to 411 (ERQASKQDDPKRRKVAAENAA) are disordered.

It belongs to the class I-like SAM-binding methyltransferase superfamily. TRM5/TYW2 family. As to quaternary structure, monomer.

The protein localises to the mitochondrion matrix. It localises to the nucleus. It is found in the cytoplasm. It catalyses the reaction guanosine(37) in tRNA + S-adenosyl-L-methionine = N(1)-methylguanosine(37) in tRNA + S-adenosyl-L-homocysteine + H(+). Its function is as follows. Specifically methylates the N1 position of guanosine-37 in various cytoplasmic and mitochondrial tRNAs. Methylation is not dependent on the nature of the nucleoside 5' of the target nucleoside. This is the first step in the biosynthesis of wybutosine (yW), a modified base adjacent to the anticodon of tRNAs and required for accurate decoding. This is tRNA (guanine(37)-N(1))-methyltransferase from Phytophthora infestans (strain T30-4) (Potato late blight agent).